We begin with the raw amino-acid sequence, 948 residues long: P cell-type agglutination protein map4 (948 aa).

The first 23 residues, 1–23, serve as a signal peptide directing secretion; that stretch reads MNSYAILLSLFFSFERLLTLANA. N-linked (GlcNAc...) asparagine glycans are attached at residues Asn-31, Asn-32, and Asn-57. Disordered stretches follow at residues 136–174 and 253–333; these read IPRG…IGTG and FYET…PTTY. The span at 149 to 174 shows a compositional bias: low complexity; the sequence is PTYSASDSSATTITSSSPSTSIIGTG. The segment covering 253–264 has biased composition (polar residues); sequence FYETKSSTSSVP. A compositionally biased stretch (low complexity) spans 265-332; sequence TQTIDSSSFT…PSLSSALPTT (68 aa). N-linked (GlcNAc...) asparagine glycosylation is present at Asn-383. Positions 408-432 are disordered; that stretch reads LTSSTKKIPSTTLPTSSKMITTTTP. Residues Asn-436, Asn-469, Asn-491, Asn-522, Asn-553, Asn-568, and Asn-598 are each glycosylated (N-linked (GlcNAc...) asparagine). 5 consecutive repeat copies span residues 617–652, 653–688, 689–724, 725–760, and 761–796. The segment at 617–796 is 5 X 36 AA approximate tandem repeats; the sequence is SYVTETTTSG…GTVLIDVPTP (180 aa). The region spanning 796–948 is the DIPSY domain; the sequence is PTASSSPFPS…ANVVLRALEY (153 aa). The N-linked (GlcNAc...) asparagine glycan is linked to Asn-921.

Belongs to the mam3/map4 family.

It localises to the cell surface. Its function is as follows. P cell-type specific protein which involved in agglutination during conjugation. This Schizosaccharomyces pombe (strain 972 / ATCC 24843) (Fission yeast) protein is P cell-type agglutination protein map4.